The following is a 38-amino-acid chain: Beta-defensin 8 (38 aa).

3 disulfide bridges follow: cysteine 7–cysteine 36, cysteine 14–cysteine 29, and cysteine 19–cysteine 37.

This sequence belongs to the beta-defensin family. In terms of tissue distribution, neutrophilic granules.

The protein resides in the secreted. In terms of biological role, has bactericidal activity. Active against E.coli ML35 and S.aureus 502A. This Bos taurus (Bovine) protein is Beta-defensin 8 (DEFB8).